A 970-amino-acid polypeptide reads, in one-letter code: uncharacterized protein (970 aa).

A disordered region spans residues 942-970 (QLSFEEDGWTESEPRPVRREAHVRAKERH). Residues 953 to 970 (SEPRPVRREAHVRAKERH) show a composition bias toward basic and acidic residues.

This is an uncharacterized protein from Frog virus 3 (isolate Goorha) (FV-3).